Consider the following 316-residue polypeptide: Transaldolase (316 aa).

Catalysis depends on Lys125, which acts as the Schiff-base intermediate with substrate.

Belongs to the transaldolase family. Type 1 subfamily. As to quaternary structure, homodimer.

It localises to the cytoplasm. The catalysed reaction is D-sedoheptulose 7-phosphate + D-glyceraldehyde 3-phosphate = D-erythrose 4-phosphate + beta-D-fructose 6-phosphate. It participates in carbohydrate degradation; pentose phosphate pathway; D-glyceraldehyde 3-phosphate and beta-D-fructose 6-phosphate from D-ribose 5-phosphate and D-xylulose 5-phosphate (non-oxidative stage): step 2/3. In terms of biological role, transaldolase is important for the balance of metabolites in the pentose-phosphate pathway. This is Transaldolase from Acidovorax ebreus (strain TPSY) (Diaphorobacter sp. (strain TPSY)).